The following is a 109-amino-acid chain: Nucleoid-associated protein CC_0268 (109 aa).

Belongs to the YbaB/EbfC family. As to quaternary structure, homodimer.

Its subcellular location is the cytoplasm. It is found in the nucleoid. Binds to DNA and alters its conformation. May be involved in regulation of gene expression, nucleoid organization and DNA protection. This chain is Nucleoid-associated protein CC_0268, found in Caulobacter vibrioides (strain ATCC 19089 / CIP 103742 / CB 15) (Caulobacter crescentus).